Reading from the N-terminus, the 168-residue chain is Large ribosomal subunit protein uL10 (168 aa).

The protein belongs to the universal ribosomal protein uL10 family. In terms of assembly, part of the ribosomal stalk of the 50S ribosomal subunit. The N-terminus interacts with L11 and the large rRNA to form the base of the stalk. The C-terminus forms an elongated spine to which L12 dimers bind in a sequential fashion forming a multimeric L10(L12)X complex.

Functionally, forms part of the ribosomal stalk, playing a central role in the interaction of the ribosome with GTP-bound translation factors. The polypeptide is Large ribosomal subunit protein uL10 (Paracidovorax citrulli (strain AAC00-1) (Acidovorax citrulli)).